Reading from the N-terminus, the 284-residue chain is ELMO domain-containing protein B (284 aa).

The region spanning 124-276 is the ELMO domain; it reads EHEASLERLW…EFETKISQNS (153 aa).

This is ELMO domain-containing protein B (elmoB) from Dictyostelium discoideum (Social amoeba).